A 235-amino-acid polypeptide reads, in one-letter code: Probable ribosomal RNA small subunit methyltransferase A (235 aa).

6 residues coordinate S-adenosyl-L-methionine: His-9, Leu-11, Gly-34, Glu-55, Asp-78, and Asn-93.

It belongs to the class I-like SAM-binding methyltransferase superfamily. rRNA adenine N(6)-methyltransferase family. RsmA subfamily.

The protein resides in the cytoplasm. Its function is as follows. Specifically dimethylates two adjacent adenosines in the loop of a conserved hairpin near the 3'-end of 16S rRNA in the 30S particle. May play a critical role in biogenesis of 30S subunits. This is Probable ribosomal RNA small subunit methyltransferase A from Pyrobaculum islandicum (strain DSM 4184 / JCM 9189 / GEO3).